A 279-amino-acid chain; its full sequence is Large ribosomal subunit protein mL46 (279 aa).

Lys-230 is modified (N6-acetyllysine).

It belongs to the mitochondrion-specific ribosomal protein mL46 family. In terms of assembly, component of the mitochondrial ribosome large subunit (39S) which comprises a 16S rRNA and about 50 distinct proteins.

The protein resides in the mitochondrion. The chain is Large ribosomal subunit protein mL46 (MRPL46) from Pongo abelii (Sumatran orangutan).